A 118-amino-acid polypeptide reads, in one-letter code: Large ribosomal subunit protein bL20 (118 aa).

It belongs to the bacterial ribosomal protein bL20 family.

Binds directly to 23S ribosomal RNA and is necessary for the in vitro assembly process of the 50S ribosomal subunit. It is not involved in the protein synthesizing functions of that subunit. The sequence is that of Large ribosomal subunit protein bL20 from Francisella philomiragia subsp. philomiragia (strain ATCC 25017 / CCUG 19701 / FSC 153 / O#319-036).